Reading from the N-terminus, the 482-residue chain is Bifunctional protein GlmU (482 aa).

The tract at residues 1-238 (MSAIRPAAVV…HREIAGINNR (238 aa)) is pyrophosphorylase. UDP-N-acetyl-alpha-D-glucosamine is bound by residues 12–15 (LAAG), K26, Q79, and 84–85 (GT). Residue D110 coordinates Mg(2+). G147, E163, N178, and N236 together coordinate UDP-N-acetyl-alpha-D-glucosamine. Residue N236 coordinates Mg(2+). A linker region spans residues 239–259 (VQLAEARRILNDRLLTRAMLA). Residues 260-482 (GVTVVDPATT…VASRKPEGED (223 aa)) form an N-acetyltransferase region. Positions 341 and 359 each coordinate UDP-N-acetyl-alpha-D-glucosamine. The active-site Proton acceptor is H371. Positions 374 and 385 each coordinate UDP-N-acetyl-alpha-D-glucosamine. Acetyl-CoA-binding positions include A388, 394-395 (NY), S413, A431, and R448.

It in the N-terminal section; belongs to the N-acetylglucosamine-1-phosphate uridyltransferase family. The protein in the C-terminal section; belongs to the transferase hexapeptide repeat family. Homotrimer. It depends on Mg(2+) as a cofactor.

Its subcellular location is the cytoplasm. It catalyses the reaction alpha-D-glucosamine 1-phosphate + acetyl-CoA = N-acetyl-alpha-D-glucosamine 1-phosphate + CoA + H(+). The enzyme catalyses N-acetyl-alpha-D-glucosamine 1-phosphate + UTP + H(+) = UDP-N-acetyl-alpha-D-glucosamine + diphosphate. It functions in the pathway nucleotide-sugar biosynthesis; UDP-N-acetyl-alpha-D-glucosamine biosynthesis; N-acetyl-alpha-D-glucosamine 1-phosphate from alpha-D-glucosamine 6-phosphate (route II): step 2/2. The protein operates within nucleotide-sugar biosynthesis; UDP-N-acetyl-alpha-D-glucosamine biosynthesis; UDP-N-acetyl-alpha-D-glucosamine from N-acetyl-alpha-D-glucosamine 1-phosphate: step 1/1. It participates in bacterial outer membrane biogenesis; LPS lipid A biosynthesis. Its function is as follows. Catalyzes the last two sequential reactions in the de novo biosynthetic pathway for UDP-N-acetylglucosamine (UDP-GlcNAc). The C-terminal domain catalyzes the transfer of acetyl group from acetyl coenzyme A to glucosamine-1-phosphate (GlcN-1-P) to produce N-acetylglucosamine-1-phosphate (GlcNAc-1-P), which is converted into UDP-GlcNAc by the transfer of uridine 5-monophosphate (from uridine 5-triphosphate), a reaction catalyzed by the N-terminal domain. The sequence is that of Bifunctional protein GlmU from Streptomyces avermitilis (strain ATCC 31267 / DSM 46492 / JCM 5070 / NBRC 14893 / NCIMB 12804 / NRRL 8165 / MA-4680).